A 374-amino-acid chain; its full sequence is Flap endonuclease 1 (374 aa).

The interval methionine 1–arginine 105 is N-domain. Residue aspartate 34 participates in Mg(2+) binding. DNA-binding residues include arginine 47 and arginine 71. Mg(2+)-binding residues include aspartate 87, glutamate 159, glutamate 161, aspartate 180, and aspartate 182. The segment at aspartate 123–histidine 254 is I-domain. Glutamate 159 contacts DNA. Residues glycine 232 and aspartate 234 each coordinate DNA. Residue aspartate 234 coordinates Mg(2+). Residues valine 339–phenylalanine 347 form an interaction with PCNA region. Residues aspartate 353–lysine 374 are disordered.

The protein belongs to the XPG/RAD2 endonuclease family. FEN1 subfamily. In terms of assembly, interacts with PCNA. Three molecules of RAD27 bind to one PCNA trimer with each molecule binding to one PCNA monomer. PCNA stimulates the nuclease activity without altering cleavage specificity. It depends on Mg(2+) as a cofactor. In terms of processing, phosphorylated. Phosphorylation upon DNA damage induces relocalization to the nuclear plasma.

It localises to the nucleus. The protein resides in the nucleolus. It is found in the nucleoplasm. The protein localises to the mitochondrion. Functionally, structure-specific nuclease with 5'-flap endonuclease and 5'-3' exonuclease activities involved in DNA replication and repair. During DNA replication, cleaves the 5'-overhanging flap structure that is generated by displacement synthesis when DNA polymerase encounters the 5'-end of a downstream Okazaki fragment. It enters the flap from the 5'-end and then tracks to cleave the flap base, leaving a nick for ligation. Also involved in the long patch base excision repair (LP-BER) pathway, by cleaving within the apurinic/apyrimidinic (AP) site-terminated flap. Acts as a genome stabilization factor that prevents flaps from equilibrating into structures that lead to duplications and deletions. Also possesses 5'-3' exonuclease activity on nicked or gapped double-stranded DNA, and exhibits RNase H activity. Also involved in replication and repair of rDNA and in repairing mitochondrial DNA. The sequence is that of Flap endonuclease 1 from Candida tropicalis (strain ATCC MYA-3404 / T1) (Yeast).